We begin with the raw amino-acid sequence, 338 residues long: Probable 1-aminocyclopropane-1-carboxylate deaminase (338 aa).

Lys51 bears the N6-(pyridoxal phosphate)lysine mark. The active-site Nucleophile is Ser78.

The protein belongs to the ACC deaminase/D-cysteine desulfhydrase family. The cofactor is pyridoxal 5'-phosphate.

It carries out the reaction 1-aminocyclopropane-1-carboxylate + H2O = 2-oxobutanoate + NH4(+). Functionally, catalyzes a cyclopropane ring-opening reaction, the irreversible conversion of 1-aminocyclopropane-1-carboxylate (ACC) to ammonia and alpha-ketobutyrate. This is Probable 1-aminocyclopropane-1-carboxylate deaminase from Schizosaccharomyces pombe (strain 972 / ATCC 24843) (Fission yeast).